Here is an 835-residue protein sequence, read N- to C-terminus: MNQIEQKWQQIWYDEKAFEVSNESSKPKYYVLEMLPYPSGKIHVGHVRNYSIGDVIARFMTMQGFNVLHPMGWDAFGLPAENAAIKNNSHPKDWTYSNIENMKKQLKSMGFSYDWSREINSCDPQYYKHEQKFFLELYERNLAYQKESLVNWDPVDNTVLANEQVVDGRGWRSGAIVEKRYLKQWFLKITDYAEELLNEIQNLKEWPEAVRSMQEKWIGKSIGANFHFKIKDNEDNTIEVFSTKPETIFGAGFIGIAFNHPIIEKLISKTPEILSFITKCSHITGSSELEKTEKEGVFTGLYVIHPFDSNIVLPVIITNFVLMDYGTGAVFGCPAHDERDHELAVKMNLPIKQVIETDIDVQKTAYTEDGILVNSDFLNGLTSNEAKQKVIDEFEKLGIGKRSVYYRLKDWGISRQRFWGCPIPMIHCEACGIVPVPCSDLPVTLPDDVSFDGHGNPLDHHPSWKHVNCPKCDKSAIRETDTFDTFFESSWYFTRYCNSNATEMTDKKACDYWLPVDKYIGGIEHAVMHLLYARFFTKVMNEQNYVSVREPFKGLFTQGMVLHATYKDEHNNWLYPEEVVKKGNEFFHKESNNRVVQGRIEKMSKSKKNLIDLVTMQEQYGADAIRLFVLSDSPPEKDLEWSASGIEGCSRFINKLEHMFEAIASLIDDVNSEINKELNRLVHFTIKHVADDIKHFVLNRAIARMRELSNAISAELNKEVVDVKTVRYGFNVIVQLLNPFIPHITEEIWQKLGNKERLYNSAFPAFDESMLELDTYVMAVQVNGKLRDTYEFKTSASEDEIKQITVNLPKVQKFLEGKEPKKIILVPRKIVNIIV.

Residues 36–46 (PYPSGKIHVGH) carry the 'HIGH' region motif. Positions 602–606 (KMSKS) match the 'KMSKS' region motif. Lysine 605 lines the ATP pocket.

This sequence belongs to the class-I aminoacyl-tRNA synthetase family.

The protein localises to the cytoplasm. The enzyme catalyses tRNA(Leu) + L-leucine + ATP = L-leucyl-tRNA(Leu) + AMP + diphosphate. The chain is Leucine--tRNA ligase from Rickettsia felis (strain ATCC VR-1525 / URRWXCal2) (Rickettsia azadi).